The following is a 1118-amino-acid chain: Cytospin-A (1118 aa).

The segment at 1 to 176 (MKKASRSVGS…SKSKSDNQIS (176 aa)) is disordered. Over residues 29 to 52 (ESGSSLSAVTKLSKPGTSASLLKT) the composition is skewed to polar residues. Positions 79–119 (STCASTVSSTTGTTMSTLENKPRTVAGSTARRSTSSGTKES) are enriched in low complexity. Basic and acidic residues-rich tracts occupy residues 120-131 (SSSRERIRDRSR) and 158-171 (TNPESDIRMSKSKS). A coiled-coil region spans residues 193-281 (KTKDVEILHL…LNALGFSLEQ (89 aa)). Disordered regions lie at residues 299-324 (ITAGNHSDGGGTLTSSVEGSAPGSME) and 359-391 (SSDDALDAPSSSESEGVPSIERSRKGSSGNASE). The span at 359–373 (SSDDALDAPSSSESE) shows a compositional bias: low complexity. 2 coiled-coil regions span residues 396-450 (CLTE…MESL) and 488-808 (RYME…RGRV). 2 disordered regions span residues 856 to 879 (PSPAAATIPRTPLSPSPMKTPPAA) and 921 to 1002 (TSST…RKDP). Positions 937–946 (ESAKSISVSR) are enriched in low complexity. A compositionally biased stretch (basic and acidic residues) spans 947–957 (RSSEEIKRDIS). Residues 972–991 (TTSPQLSLSSSPTASVTPTT) are compositionally biased toward low complexity. A Calponin-homology (CH) domain is found at 1012-1117 (GSKRNALLKW…YVTAIYKYFE (106 aa)).

The protein belongs to the cytospin-A family. In terms of assembly, may interact with both microtubules and actin cytoskeleton.

Its subcellular location is the cytoplasm. It is found in the cytoskeleton. It localises to the spindle. The protein resides in the cell junction. The protein localises to the gap junction. Involved in cytokinesis and spindle organization. May play a role in actin cytoskeleton organization and microtubule stabilization and hence required for proper cell adhesion and migration. This Gallus gallus (Chicken) protein is Cytospin-A (SPECC1L).